The sequence spans 179 residues: MNRLQERYEKEVVPAMMEKFGYKNIMQVPKIEKVVINMGVGEAKDNPKVLESAVSDLQIIAGQKPVLTRAKKSVANFKIRENMALGCKVTLRKTNMYEFVDKLVSIALPRVRDFRGVSAKAFDGRGNYSLGIKEQLIFPEIEYDKVDKVRGMDIIFVTSANTDEEARELLRFLGMPFAQ.

It belongs to the universal ribosomal protein uL5 family. Part of the 50S ribosomal subunit; part of the 5S rRNA/L5/L18/L25 subcomplex. Contacts the 5S rRNA and the P site tRNA. Forms a bridge to the 30S subunit in the 70S ribosome.

Functionally, this is one of the proteins that bind and probably mediate the attachment of the 5S RNA into the large ribosomal subunit, where it forms part of the central protuberance. In the 70S ribosome it contacts protein S13 of the 30S subunit (bridge B1b), connecting the 2 subunits; this bridge is implicated in subunit movement. Contacts the P site tRNA; the 5S rRNA and some of its associated proteins might help stabilize positioning of ribosome-bound tRNAs. The polypeptide is Large ribosomal subunit protein uL5 (Clostridium perfringens (strain ATCC 13124 / DSM 756 / JCM 1290 / NCIMB 6125 / NCTC 8237 / Type A)).